A 170-amino-acid chain; its full sequence is Probable host range protein 2 (170 aa).

The interval serine 145–threonine 170 is disordered. Positions aspartate 152 to aspartate 163 are enriched in basic and acidic residues.

The protein belongs to the poxviridae C7 protein family.

Plays a role for multiplication of the virus in different cell types. This Bos taurus (Bovine) protein is Probable host range protein 2.